We begin with the raw amino-acid sequence, 188 residues long: MASIIHAKDLRSGHTFTLDGKIYLVIENSFNKTAMREGIVKCKVKNLRTGSITTEVLTGMKLEQANIEKVKMSFVYQDQNSFVFMNNETYEQIEVPAKLLEYEKNFITENTEALIMRYEDEILGVNLPDQVVIEIDYAEDAVQGNSVNNALKKATLVTGYVIEVPQFIKSKEKVIVSTVDGKYVSRAN.

Belongs to the elongation factor P family.

The protein localises to the cytoplasm. The protein operates within protein biosynthesis; polypeptide chain elongation. In terms of biological role, involved in peptide bond synthesis. Stimulates efficient translation and peptide-bond synthesis on native or reconstituted 70S ribosomes in vitro. Probably functions indirectly by altering the affinity of the ribosome for aminoacyl-tRNA, thus increasing their reactivity as acceptors for peptidyl transferase. The chain is Elongation factor P from Mycoplasmoides gallisepticum (strain R(low / passage 15 / clone 2)) (Mycoplasma gallisepticum).